Here is a 198-residue protein sequence, read N- to C-terminus: MPIGVPKVPYRLPGEPYTQWIDIYNRLYRERIIFLGKEVDDEIANQIVAVMLYLDSEDPGKDIMLYINSPGGSVTAGMAIYDTMQHIKSDVVTICVGLAASMGSFLLAAGTKGKRLALPHSRIMIHQPSGGTRGQATDIEIEAREILRVRRQLNELYAYHTGQPLEKIERDMDRDFFMSAEEAKNYGLIDRVIEERSN.

S101 serves as the catalytic Nucleophile. Residue H126 is part of the active site.

The protein belongs to the peptidase S14 family. In terms of assembly, fourteen ClpP subunits assemble into 2 heptameric rings which stack back to back to give a disk-like structure with a central cavity, resembling the structure of eukaryotic proteasomes.

Its subcellular location is the cytoplasm. It carries out the reaction Hydrolysis of proteins to small peptides in the presence of ATP and magnesium. alpha-casein is the usual test substrate. In the absence of ATP, only oligopeptides shorter than five residues are hydrolyzed (such as succinyl-Leu-Tyr-|-NHMec, and Leu-Tyr-Leu-|-Tyr-Trp, in which cleavage of the -Tyr-|-Leu- and -Tyr-|-Trp bonds also occurs).. Cleaves peptides in various proteins in a process that requires ATP hydrolysis. Has a chymotrypsin-like activity. Plays a major role in the degradation of misfolded proteins. In Thermosynechococcus vestitus (strain NIES-2133 / IAM M-273 / BP-1), this protein is ATP-dependent Clp protease proteolytic subunit 2.